Consider the following 224-residue polypeptide: Large ribosomal subunit protein uL1 (224 aa).

The protein belongs to the universal ribosomal protein uL1 family. As to quaternary structure, part of the 50S ribosomal subunit.

Functionally, binds directly to 23S rRNA. The L1 stalk is quite mobile in the ribosome, and is involved in E site tRNA release. In terms of biological role, protein L1 is also a translational repressor protein, it controls the translation of the L11 operon by binding to its mRNA. In Borrelia duttonii (strain Ly), this protein is Large ribosomal subunit protein uL1.